The chain runs to 543 residues: MASGGGGGNTGAGGGPGMGLSLGLGLGLSLGMSEATSEAEEEAATAEAVGRLATTLWLRLRGWEAVLAAAQRLLVWEKPLHSLVTAAALNGLFWLLSSSSLRPFFLLSVSLLAYFLLDLWQPRFLPDVSASSPEEPHSDSEGAGSGARPHLLSVPELCRYLAESWLTFQIHLQELLQYKRQNPAQFCVRVCSGCAVLAVLGHYVPGIMISYIVLLSILLWPLVVYHELIQRMYTRLEPLLMQLDYSMKAEANALHHKHDKRKRQGKNAPPGGDEPLAETESESEAELAGFSPVVDVKKTALALAITDSELSDEEASILESGGFSVSRATTPQLTDVSEDLDQQSLPSEPEETLSRDLGEGEEGELAPPEDLLGRPQALSRQALDSEEEEEDVAAKETLLRLSSPLHFVNTHFNGAGSPPDGVKCSPGGPVETLSPETVSGGLTALPGTLSPPLCLVGSDPAPSPSILPPVPQDSPQPLPAPEEEEALTTEDFELLDQGELEQLNAELGLEPETPPKPPDAPPLGPDIHSLVQSDQEAQAVAEP.

3 helical membrane passes run 12-32 (AGGGPGMGLSLGLGLGLSLGM), 100-120 (SLRPFFLLSVSLLAYFLLDLW), and 204-224 (VPGIMISYIVLLSILLWPLVV). Over residues 254-265 (LHHKHDKRKRQG) the composition is skewed to basic residues. The segment at 254–287 (LHHKHDKRKRQGKNAPPGGDEPLAETESESEAEL) is disordered. Over residues 275–285 (PLAETESESEA) the composition is skewed to acidic residues. Thr-279 is subject to Phosphothreonine. 4 positions are modified to phosphoserine: Ser-281, Ser-283, Ser-291, and Ser-311. Thr-334 bears the Phosphothreonine mark. Disordered stretches follow at residues 336–394 (VSED…DVAA) and 411–486 (HFNG…EEEA). Phosphoserine is present on residues Ser-337, Ser-344, Ser-347, and Ser-385. The span at 461–480 (APSPSILPPVPQDSPQPLPA) shows a compositional bias: pro residues. The short motif at 490–495 (EDFELL) is the LIR motif element. Residues 504 to 543 (NAELGLEPETPPKPPDAPPLGPDIHSLVQSDQEAQAVAEP) are disordered. A compositionally biased stretch (pro residues) spans 512–524 (ETPPKPPDAPPLG).

The protein belongs to the RETREG family. In terms of assembly, interacts with ATG8 family modifier proteins MAP1LC3A, MAP1LC3B, MAP1LC3C, GABARAP, GABARAPL1 and GABARAPL2. Shows higher affinity for GABARAPL1 than for MAP1LC3B. Interacts with CANX.

The protein resides in the endoplasmic reticulum membrane. Its function is as follows. Endoplasmic reticulum (ER)-anchored autophagy regulator which exists in an inactive state under basal conditions but is activated following cellular stress. When activated, induces ER fragmentation and mediates ER delivery into lysosomes through sequestration into autophagosomes via interaction with ATG8 family proteins. Required for collagen quality control in a LIR motif-independent manner. The polypeptide is Reticulophagy regulator 2 (Homo sapiens (Human)).